The sequence spans 327 residues: E3 ubiquitin ligase Rnf121 (327 aa).

A2 is subject to N-acetylalanine. 5 consecutive transmembrane segments (helical) span residues 50–70 (MHAE…LLLV), 79–99 (SYNM…TVKL), 100–120 (HWWR…FVTF), 148–168 (ATGI…NLLF), and 172–192 (PEDA…YGVL). The RING-type; atypical zinc finger occupies 226–276 (CAVCGQQIFVDVNEEGIIENTYRLSCNHVFHEFCIRGWCIVGKKQTCPYCK). Residues 306–326 (LVAWQPVIIGLVQGISYILGL) traverse the membrane as a helical segment.

Belongs to the RNF121 family.

Its subcellular location is the endoplasmic reticulum membrane. The catalysed reaction is S-ubiquitinyl-[E2 ubiquitin-conjugating enzyme]-L-cysteine + [acceptor protein]-L-lysine = [E2 ubiquitin-conjugating enzyme]-L-cysteine + N(6)-ubiquitinyl-[acceptor protein]-L-lysine.. Its pathway is protein modification; protein ubiquitination. In terms of biological role, E3 ubiquitin ligase which accepts ubiquitin and transfers it to substrates thereby promoting their degradation by the endoplasmic reticulum-associated degradation (ERAD) pathway which is a pathway involved in ubiquitin-dependent degradation of misfolded endoplasmic reticulum proteins. May regulate the unfolded protein response to reduce endoplasmic reticulum stress. This chain is E3 ubiquitin ligase Rnf121 (Rnf121), found in Mus musculus (Mouse).